A 358-amino-acid chain; its full sequence is Hydroxyproline O-arabinosyltransferase 3 (358 aa).

Residues Leu8–Val28 traverse the membrane as a helical; Signal-anchor segment.

Ubiquitous.

Its subcellular location is the golgi apparatus. The protein resides in the cis-Golgi network membrane. The catalysed reaction is trans-4-hydroxy-L-prolyl-[protein] + UDP-beta-L-arabinofuranose = O-(beta-L-arabinofuranosyl)-trans-4-hydroxy-L-prolyl-[protein] + UDP + H(+). In terms of biological role, glycosyltransferase involved in the O-arabinosylation of several proteins including extensins and small signaling peptides. Catalyzes the transfer of the initial L-arabinose to the hydroxyl group of Hyp residues. Contributes redundantly with HPAT1 and HPAT2 to arabinosylation of EXT3, but main contributor to arabinosylation of CLE peptides. This Arabidopsis thaliana (Mouse-ear cress) protein is Hydroxyproline O-arabinosyltransferase 3.